Consider the following 736-residue polypeptide: Prolyl 3-hydroxylase 3 (736 aa).

The signal sequence occupies residues methionine 1–proline 20. 3 TPR repeats span residues proline 37–leucine 70, arginine 154–histidine 187, and histidine 216–glutamine 249. The tract at residues cysteine 253–serine 275 is disordered. Residues glutamate 258–glycine 272 show a composition bias toward acidic residues. The stretch at proline 316–aspartate 349 is one TPR 4 repeat. N-linked (GlcNAc...) asparagine glycosylation is found at asparagine 331 and asparagine 462. Residues threonine 561–tryptophan 675 enclose the Fe2OG dioxygenase domain. Fe cation is bound by residues histidine 584, aspartate 586, and histidine 656. The active site involves arginine 666. The stretch at glutamate 681–aspartate 709 forms a coiled coil. Residues glutamate 689 to leucine 736 are disordered. Over residues serine 694–glutamate 704 the composition is skewed to acidic residues. Over residues arginine 721–leucine 736 the composition is skewed to basic and acidic residues. Positions arginine 733–leucine 736 match the Prevents secretion from ER motif.

It belongs to the leprecan family. Identified in a complex with PLOD1 and P3H4. It depends on Fe cation as a cofactor. L-ascorbate is required as a cofactor. In terms of tissue distribution, detected in fetal cartilage (at protein level). Weak expression in heart, lung, ovary and skeletal muscle.

The protein localises to the endoplasmic reticulum. The enzyme catalyses L-prolyl-[collagen] + 2-oxoglutarate + O2 = trans-3-hydroxy-L-prolyl-[collagen] + succinate + CO2. Functionally, part of a complex composed of PLOD1, P3H3 and P3H4 that catalyzes hydroxylation of lysine residues in collagen alpha chains and is required for normal assembly and cross-linkling of collagen fibrils. Required for normal hydroxylation of lysine residues in type I collagen chains in skin, bone, tendon, aorta and cornea. Required for normal skin stability via its role in hydroxylation of lysine residues in collagen alpha chains and in collagen fibril assembly. Apparently not required for normal prolyl 3-hydroxylation on collagen chains, possibly because it functions redundantly with other prolyl 3-hydroxylases. The chain is Prolyl 3-hydroxylase 3 from Homo sapiens (Human).